A 231-amino-acid polypeptide reads, in one-letter code: Ureidoacrylate amidohydrolase RutB (231 aa).

Asp-25 functions as the Proton acceptor in the catalytic mechanism. Residue Lys-134 is part of the active site. Catalysis depends on Cys-167, which acts as the Nucleophile.

The protein belongs to the isochorismatase family. RutB subfamily.

The catalysed reaction is (Z)-3-ureidoacrylate + H2O + H(+) = (Z)-3-aminoacrylate + NH4(+) + CO2. It carries out the reaction (Z)-3-ureidoacrylate + H2O = (Z)-3-aminoacrylate + carbamate + H(+). It catalyses the reaction (Z)-2-methylureidoacrylate + H2O + H(+) = (Z)-2-methylaminoacrylate + NH4(+) + CO2. Functionally, hydrolyzes ureidoacrylate to form aminoacrylate and carbamate. The carbamate hydrolyzes spontaneously, thereby releasing one of the nitrogen atoms of the pyrimidine ring as ammonia and one of its carbon atoms as CO2. This is Ureidoacrylate amidohydrolase RutB from Escherichia coli O139:H28 (strain E24377A / ETEC).